A 372-amino-acid chain; its full sequence is N-methyl-L-tryptophan oxidase (372 aa).

4–34 (DLIIIGSGSVGAAAGYYATRAGLKVLMTDAH) contacts FAD. Cys307 carries the S-8alpha-FAD cysteine modification.

It belongs to the MSOX/MTOX family. MTOX subfamily. Monomer. Requires FAD as cofactor.

The catalysed reaction is N(alpha)-methyl-L-tryptophan + O2 + H2O = L-tryptophan + formaldehyde + H2O2. Catalyzes the oxidative demethylation of N-methyl-L-tryptophan. This Salmonella typhimurium (strain LT2 / SGSC1412 / ATCC 700720) protein is N-methyl-L-tryptophan oxidase.